A 216-amino-acid chain; its full sequence is UPF0301 protein Nham_3550 (216 aa).

Residues 1–10 (MSAARKRPGT) are compositionally biased toward basic residues. The interval 1-25 (MSAARKRPGTGRRQTDDADTGAPDQ) is disordered.

This sequence belongs to the UPF0301 (AlgH) family.

This Nitrobacter hamburgensis (strain DSM 10229 / NCIMB 13809 / X14) protein is UPF0301 protein Nham_3550.